The sequence spans 305 residues: Superkiller complex protein 8 (305 aa).

WD repeat units follow at residues 14-57 (AHED…LELQ), 62-101 (GHQLGVVSVDVSPSGNIMASSSLDAHIRLWDLESGKQIRA), 104-143 (AGPVDAWSVAFSPDSQHLATGSHVGKVNIFGVETGKKEYS), 146-187 (TRGK…HTLE), 188-227 (GHAMPIRSLTFSPDSQLLVTASDDGYIKIYEVQHASLAAT), 230-269 (GHGSWVLNVAFSPDDTHFVSSSSDKSVKVWDVSARTCVHT), and 272-305 (DHQDQVWGVKYNKNGSKIVSVADDQEIHVYDCPI).

The protein belongs to the SKI8 family. As to quaternary structure, component of the PAF1 complex. Component of the SKI complex.

The protein localises to the nucleus. The protein resides in the cytoplasm. Component of the PAF1 complex (PAF1C) which has multiple functions during transcription by RNA polymerase II and is implicated in regulation of development and maintenance of embryonic stem cell pluripotency. PAF1C associates with RNA polymerase II through interaction with POLR2A CTD non-phosphorylated and 'Ser-2'- and 'Ser-5'-phosphorylated forms and is involved in transcriptional elongation, acting both independently and synergistically with TCEA1 and in cooperation with the DSIF complex and HTATSF1. Also acts as a component of the SKI complex, a multiprotein complex that assists the RNA-degrading exosome during the mRNA decay and quality-control pathways. The SKI complex catalyzes mRNA extraction from 80S ribosomal complexes in the 3'-5' direction and channels mRNA to the cytosolic exosome for degradation. The sequence is that of Superkiller complex protein 8 (skic8) from Xenopus tropicalis (Western clawed frog).